The chain runs to 385 residues: Ribosomal RNA large subunit methyltransferase G (385 aa).

This sequence belongs to the methyltransferase superfamily. RlmG family.

Its subcellular location is the cytoplasm. It carries out the reaction guanosine(1835) in 23S rRNA + S-adenosyl-L-methionine = N(2)-methylguanosine(1835) in 23S rRNA + S-adenosyl-L-homocysteine + H(+). Functionally, specifically methylates the guanine in position 1835 (m2G1835) of 23S rRNA. This Vibrio campbellii (strain ATCC BAA-1116) protein is Ribosomal RNA large subunit methyltransferase G.